A 291-amino-acid chain; its full sequence is Porphobilinogen deaminase (291 aa).

S-(dipyrrolylmethanemethyl)cysteine is present on Cys-237.

It belongs to the HMBS family. In terms of assembly, monomer. Requires dipyrromethane as cofactor.

It catalyses the reaction 4 porphobilinogen + H2O = hydroxymethylbilane + 4 NH4(+). The protein operates within porphyrin-containing compound metabolism; protoporphyrin-IX biosynthesis; coproporphyrinogen-III from 5-aminolevulinate: step 2/4. Functionally, tetrapolymerization of the monopyrrole PBG into the hydroxymethylbilane pre-uroporphyrinogen in several discrete steps. In Clostridium perfringens (strain 13 / Type A), this protein is Porphobilinogen deaminase.